We begin with the raw amino-acid sequence, 87 residues long: ParB-like nuclease domain-containing protein YnaK (87 aa).

The protein is ParB-like nuclease domain-containing protein YnaK (ynaK) of Escherichia coli (strain K12).